A 211-amino-acid chain; its full sequence is ATP phosphoribosyltransferase (211 aa).

Belongs to the ATP phosphoribosyltransferase family. Short subfamily. As to quaternary structure, heteromultimer composed of HisG and HisZ subunits.

The protein localises to the cytoplasm. The catalysed reaction is 1-(5-phospho-beta-D-ribosyl)-ATP + diphosphate = 5-phospho-alpha-D-ribose 1-diphosphate + ATP. It participates in amino-acid biosynthesis; L-histidine biosynthesis; L-histidine from 5-phospho-alpha-D-ribose 1-diphosphate: step 1/9. Catalyzes the condensation of ATP and 5-phosphoribose 1-diphosphate to form N'-(5'-phosphoribosyl)-ATP (PR-ATP). Has a crucial role in the pathway because the rate of histidine biosynthesis seems to be controlled primarily by regulation of HisG enzymatic activity. The sequence is that of ATP phosphoribosyltransferase from Thermosynechococcus vestitus (strain NIES-2133 / IAM M-273 / BP-1).